The chain runs to 254 residues: MKIGIFDSGVGGLTVLKAIRNRYRKVDIVYLGDTARVPYGIRSKDTIIRYSLECAGFLKDKGVDIIVVACNTASAYALERLKKEINVPVFGVIEPGVKEALKKSRNKKIGVIGTPATVKSGAYQRKLEEGGADVFAKACPLFVPLAEEGLLEGEITRKVVEHYLKEFKGKIDTLILGCTHYPLLKKEIKKFLGDVEVVDSSEALSLSLHNFIKDDGSSSLELFFTDLSPNLQFLIKLILGRDYPVKLAEGVFTH.

Residues 7-8 (DS) and 39-40 (YG) contribute to the substrate site. The Proton donor/acceptor role is filled by Cys70. Residues 71-72 (NT) and Glu147 contribute to the substrate site. Cys178 (proton donor/acceptor) is an active-site residue. 179–180 (TH) is a binding site for substrate.

Belongs to the aspartate/glutamate racemases family. In terms of assembly, homodimer.

It carries out the reaction L-glutamate = D-glutamate. It participates in cell wall biogenesis; peptidoglycan biosynthesis. Its function is as follows. Provides the (R)-glutamate required for cell wall biosynthesis. Converts L- or D-glutamate to D- or L-glutamate, respectively, but not other amino acids such as alanine, aspartate, and glutamine. In Aquifex pyrophilus, this protein is Glutamate racemase.